The following is a 335-amino-acid chain: RNA polymerase sigma factor RpoS (335 aa).

The segment at 57 to 90 is sigma-70 factor domain-1; sequence DATQMYLSEIGFSPLLTAEEEVLYARRALRGDEA. Positions 95-165 are sigma-70 factor domain-2; the sequence is MIESNLRLVV…ERALMNQTRT (71 aa). Residues 119-122 carry the Interaction with polymerase core subunit RpoC motif; it reads DLIE. A sigma-70 factor domain-3 region spans residues 175-250; sequence ELNIYLRTAR…DSHNADPEFS (76 aa). The interval 263 to 316 is sigma-70 factor domain-4; sequence WLDELNPKQKEVLARRFGLLGYEPSTLEEVGREINLTRERVRQIQVEGLRRLRE. Positions 289–308 form a DNA-binding region, H-T-H motif; sequence LEEVGREINLTRERVRQIQV.

This sequence belongs to the sigma-70 factor family. RpoS subfamily. Interacts with the RNA polymerase core enzyme.

It is found in the cytoplasm. In terms of biological role, sigma factors are initiation factors that promote the attachment of RNA polymerase to specific initiation sites and are then released. This sigma factor is the master transcriptional regulator of the stationary phase and the general stress response. May be required for the persistence of V.cholerae in aquatic habitats. This Vibrio cholerae serotype O1 (strain ATCC 39315 / El Tor Inaba N16961) protein is RNA polymerase sigma factor RpoS.